The chain runs to 119 residues: Flagellar transcriptional regulator FlhD (119 aa).

Belongs to the FlhD family. In terms of assembly, homodimer; disulfide-linked. Forms a heterohexamer composed of two FlhC and four FlhD subunits. Each FlhC binds a FlhD dimer, forming a heterotrimer, and a hexamer assembles by dimerization of two heterotrimers.

The protein resides in the cytoplasm. In terms of biological role, functions in complex with FlhC as a master transcriptional regulator that regulates transcription of several flagellar and non-flagellar operons by binding to their promoter region. Activates expression of class 2 flagellar genes, including fliA, which is a flagellum-specific sigma factor that turns on the class 3 genes. Also regulates genes whose products function in a variety of physiological pathways. The sequence is that of Flagellar transcriptional regulator FlhD from Shigella dysenteriae serotype 1 (strain Sd197).